The following is a 126-amino-acid chain: Large ribosomal subunit protein bL12 (126 aa).

Low complexity predominate over residues 36 to 55 (APAPAAAPAAGGDQGGAEAA). The interval 36–57 (APAPAAAPAAGGDQGGAEAAEQ) is disordered.

It belongs to the bacterial ribosomal protein bL12 family. Homodimer. Part of the ribosomal stalk of the 50S ribosomal subunit. Forms a multimeric L10(L12)X complex, where L10 forms an elongated spine to which 2 to 4 L12 dimers bind in a sequential fashion. Binds GTP-bound translation factors.

Functionally, forms part of the ribosomal stalk which helps the ribosome interact with GTP-bound translation factors. Is thus essential for accurate translation. In Natranaerobius thermophilus (strain ATCC BAA-1301 / DSM 18059 / JW/NM-WN-LF), this protein is Large ribosomal subunit protein bL12.